Here is a 62-residue protein sequence, read N- to C-terminus: Small ribosomal subunit protein eS30z/eS30y/eS30x (62 aa).

The tract at residues 1-38 is disordered; the sequence is MGKVHGSLARAGKVRGQTPKVAKQDKKKKPRGRAHKRL. A compositionally biased stretch (basic residues) spans 25–38; that stretch reads DKKKKPRGRAHKRL.

It belongs to the eukaryotic ribosomal protein eS30 family.

In Arabidopsis thaliana (Mouse-ear cress), this protein is Small ribosomal subunit protein eS30z/eS30y/eS30x (RPS30A).